Consider the following 602-residue polypeptide: Elongation factor 4 (602 aa).

The 182-residue stretch at 8-189 (KNIRNFSIIA…KIITTIPAPS (182 aa)) folds into the tr-type G domain. Residues 20–25 (DHGKST) and 136–139 (NKID) each bind GTP.

Belongs to the TRAFAC class translation factor GTPase superfamily. Classic translation factor GTPase family. LepA subfamily.

The protein localises to the cell inner membrane. The enzyme catalyses GTP + H2O = GDP + phosphate + H(+). Its function is as follows. Required for accurate and efficient protein synthesis under certain stress conditions. May act as a fidelity factor of the translation reaction, by catalyzing a one-codon backward translocation of tRNAs on improperly translocated ribosomes. Back-translocation proceeds from a post-translocation (POST) complex to a pre-translocation (PRE) complex, thus giving elongation factor G a second chance to translocate the tRNAs correctly. Binds to ribosomes in a GTP-dependent manner. The protein is Elongation factor 4 of Helicobacter pylori (strain ATCC 700392 / 26695) (Campylobacter pylori).